The chain runs to 155 residues: MSRRGTAEEKTAKSDPIYRNRLVNMLVNRILKHGKKSLAYQIIYRAVKKIQQKTETNPLSVLRQAIHGVTPGIAVKARRVGGSTHQVPIEIGSTQGKALAIRWLLAASRKRPGRNMAFKLSSELVDAAKGSGDAIRKREETHRMAEANRAFAHFR.

Belongs to the universal ribosomal protein uS7 family. As to quaternary structure, part of the 30S ribosomal subunit.

Its subcellular location is the plastid. It localises to the chloroplast. Functionally, one of the primary rRNA binding proteins, it binds directly to 16S rRNA where it nucleates assembly of the head domain of the 30S subunit. The chain is Small ribosomal subunit protein uS7cz/uS7cy (rps7-A) from Guizotia abyssinica (Niger).